A 399-amino-acid polypeptide reads, in one-letter code: E3 ubiquitin-protein ligase APD4 (399 aa).

The next 2 helical transmembrane spans lie at 42 to 62 (FGIIMGLWFFASVCLIFGVYG) and 284 to 304 (LIAYGSFTGVLLSFMLVAIHF). An RING-type zinc finger spans residues 348-387 (CAICFDAPRDCCFLPCGHCVSCYQCGTKIKRTKGRCPICR).

In terms of tissue distribution, expressed in the shoot apical meristems (SAM), root tips and inflorescences.

It is found in the endomembrane system. It localises to the vacuole membrane. It catalyses the reaction S-ubiquitinyl-[E2 ubiquitin-conjugating enzyme]-L-cysteine + [acceptor protein]-L-lysine = [E2 ubiquitin-conjugating enzyme]-L-cysteine + N(6)-ubiquitinyl-[acceptor protein]-L-lysine.. The protein operates within protein modification; protein ubiquitination. Its function is as follows. Involved in pollen mitosis II (PMII) regulation during male gametogenesis. The sequence is that of E3 ubiquitin-protein ligase APD4 from Arabidopsis thaliana (Mouse-ear cress).